Here is a 338-residue protein sequence, read N- to C-terminus: Photosystem II assembly lipoprotein Ycf48 (338 aa).

Positions 1 to 23 (MKRLFSNVINLTLVLIVGVALSG) are cleaved as a signal peptide. Cysteine 24 carries the N-palmitoyl cysteine lipid modification. Cysteine 24 is lipidated: S-diacylglycerol cysteine.

The protein belongs to the Ycf48 family. In terms of assembly, part of early PSII assembly complexes which includes D1 (psbA) and PsbI; not found in mature PSII. Binds to the lumenal side of PSII complexes. Interacts with YidC.

It localises to the cellular thylakoid membrane. Its function is as follows. A factor required for optimal assembly of photosystem II (PSII), acting in the early stages of PSII assembly. Also plays a role in replacement of photodamaged D1 (psbA). Assists YidC in synthesis of chlorophyll-binding proteins. This Prochlorococcus marinus (strain NATL2A) protein is Photosystem II assembly lipoprotein Ycf48.